The following is a 435-amino-acid chain: MKIEVKESTMVKPAAETPQQRLWNSNVDLVVPNFHTPSVYFYRPTGSPNFFDGKVLKEALSKALVPFYPMAGRLCRDEDGRIEIDCKGQGVLFVEAESDGVVDDFGDFAPTLELRQLIPAVDYSQGIQSYALLVLQITHFKCGGVSLGVGMQHHAADGASGLHFINTWSDMARGLDLTIPPFIDRTLLRARDPPQPQFPHVEYQPPPTLKVTPENTPISEAVPETSVSIFKLTRDQINTLKAKSKEDGNTVNYSSYEMLAGHVWRSTCMARGLAHDQETKLYIATDGRSRLRPSLPPGYFGNVIFTTTPIAVAGDIQSKPIWYAASKLHDALARMDNDYLRSALDYLELQPDLKALVRGAHTFKCPNLGITSWSRLPIHDADFGWGRPIFMGPGGIAYEGLSFILPSPTNDGSQSVAISLQAEHMKLFEKFLYDF.

Residues His153 and Asp382 each act as proton acceptor in the active site.

This sequence belongs to the plant acyltransferase family. In terms of tissue distribution, highly expressed in stem vascular tissues.

The catalysed reaction is shikimate + 4-coumaroyl-CoA = trans-4-coumaroylshikimate + CoA. In terms of biological role, acyltransferase involved in the biosynthesis of lignin. The affinity for shikimate as acceptor is 100-fold higher than for quinate. The most efficient donors are caffeoyl-CoA &gt; p-coumaroyl-CoA &gt; feruloyl-CoA &gt;&gt; sinapoyl-CoA. This is Shikimate O-hydroxycinnamoyltransferase (HST) from Nicotiana tabacum (Common tobacco).